The sequence spans 543 residues: Lipoyl synthase, apicoplast (543 aa).

The N-terminal stretch at 1–63 is a signal peptide; it reads MAYFFDFPTD…LFSLLSASQS (63 aa). Residues cysteine 252, cysteine 257, cysteine 263, cysteine 278, cysteine 282, cysteine 285, and serine 493 each contribute to the [4Fe-4S] cluster site. The Radical SAM core domain maps to 264–482; it reads WNGGTATLIL…QDIAEEMGFK (219 aa).

It belongs to the radical SAM superfamily. Lipoyl synthase family. Requires [4Fe-4S] cluster as cofactor.

It is found in the plastid. It localises to the apicoplast. It carries out the reaction [[Fe-S] cluster scaffold protein carrying a second [4Fe-4S](2+) cluster] + N(6)-octanoyl-L-lysyl-[protein] + 2 oxidized [2Fe-2S]-[ferredoxin] + 2 S-adenosyl-L-methionine + 4 H(+) = [[Fe-S] cluster scaffold protein] + N(6)-[(R)-dihydrolipoyl]-L-lysyl-[protein] + 4 Fe(3+) + 2 hydrogen sulfide + 2 5'-deoxyadenosine + 2 L-methionine + 2 reduced [2Fe-2S]-[ferredoxin]. It participates in protein modification; protein lipoylation via endogenous pathway; protein N(6)-(lipoyl)lysine from octanoyl-[acyl-carrier-protein]: step 2/2. Catalyzes the radical-mediated insertion of two sulfur atoms into the C-6 and C-8 positions of the octanoyl moiety bound to the lipoyl domains of lipoate-dependent enzymes, thereby converting the octanoylated domains into lipoylated derivatives. The protein is Lipoyl synthase, apicoplast of Toxoplasma gondii.